Consider the following 492-residue polypeptide: Cysteine--tRNA ligase (492 aa).

Zn(2+) is bound at residue Cys-29. Residues 31–41 (PTVYDYAHIGN) carry the 'HIGH' region motif. Cys-222, His-247, and Glu-251 together coordinate Zn(2+). Residues 279–283 (KMSKS) carry the 'KMSKS' region motif. Residue Lys-282 coordinates ATP.

It belongs to the class-I aminoacyl-tRNA synthetase family. Monomer. The cofactor is Zn(2+).

The protein resides in the cytoplasm. The enzyme catalyses tRNA(Cys) + L-cysteine + ATP = L-cysteinyl-tRNA(Cys) + AMP + diphosphate. In Treponema denticola (strain ATCC 35405 / DSM 14222 / CIP 103919 / JCM 8153 / KCTC 15104), this protein is Cysteine--tRNA ligase.